Consider the following 60-residue polypeptide: Large ribosomal subunit protein bL32 (60 aa).

The segment at 1-60 (MAVQQNKKSPSKRGMHRSHNALTVPGIAVESTTGETHLRHHISPTGFYRGRKVLKTKSEA) is disordered. Basic residues-rich tracts occupy residues 9–19 (SPSKRGMHRSH) and 49–60 (RGRKVLKTKSEA).

It belongs to the bacterial ribosomal protein bL32 family.

The chain is Large ribosomal subunit protein bL32 from Polaromonas sp. (strain JS666 / ATCC BAA-500).